The chain runs to 127 residues: Gonadotropin subunit beta-1 (127 aa).

A signal peptide spans 1–22 (MHLAVTALCLTLAPVLARASTS). Cystine bridges form between Cys23–Cys71, Cys37–Cys86, Cys40–Cys124, Cys48–Cys102, Cys52–Cys104, and Cys107–Cys114. 2 N-linked (GlcNAc...) asparagine glycosylation sites follow: Asn27 and Asn44.

Belongs to the glycoprotein hormones subunit beta family. In terms of assembly, heterodimer of an alpha and a beta chain.

The protein resides in the secreted. Its function is as follows. Involved in gametogenesis and steroidogenesis. The polypeptide is Gonadotropin subunit beta-1 (cgba) (Anguilla japonica (Japanese eel)).